The sequence spans 217 residues: Probable transaldolase (217 aa).

Catalysis depends on K83, which acts as the Schiff-base intermediate with substrate.

The protein belongs to the transaldolase family. Type 3B subfamily.

Its subcellular location is the cytoplasm. The catalysed reaction is D-sedoheptulose 7-phosphate + D-glyceraldehyde 3-phosphate = D-erythrose 4-phosphate + beta-D-fructose 6-phosphate. It functions in the pathway carbohydrate degradation; pentose phosphate pathway; D-glyceraldehyde 3-phosphate and beta-D-fructose 6-phosphate from D-ribose 5-phosphate and D-xylulose 5-phosphate (non-oxidative stage): step 2/3. In terms of biological role, transaldolase is important for the balance of metabolites in the pentose-phosphate pathway. This Caldicellulosiruptor saccharolyticus (strain ATCC 43494 / DSM 8903 / Tp8T 6331) protein is Probable transaldolase.